A 260-amino-acid chain; its full sequence is Mitochondrial import inner membrane translocase subunit Tim29 (260 aa).

The N-terminal 31 residues, 1-31 (MAAAALRRFWSRRRAEAGDAVVAKPGVWARL), are a transit peptide targeting the mitochondrion. Topologically, residues 32 to 59 (GSWARALLRDYAEACRDASAEARARPGR) are mitochondrial matrix. A helical membrane pass occupies residues 60–77 (AAVYVGLLGGAAACFTLA). Topologically, residues 78–260 (PSEGAFEEAL…HSLVQAEAPR (183 aa)) are mitochondrial intermembrane.

As to quaternary structure, component of the TIM22 complex, which core is composed of TIMM22, associated with TIMM10 (TIMM10A and/or TIMM10B), TIMM9, AGK and TIMM29. Interacts with TIMM10B; the interaction is direct. Interacts with TOMM40; linking the TIM22 complex to the TOM complex. Interacts with TIMM22 (when oxidized); the interaction is direct.

It is found in the mitochondrion inner membrane. Functionally, component of the TIM22 complex, a complex that mediates the import and insertion of multi-pass transmembrane proteins into the mitochondrial inner membrane. The TIM22 complex forms a twin-pore translocase that uses the membrane potential as the external driving force. Required for the stability of the TIM22 complex and functions in the assembly of the TIMM22 protein into the TIM22 complex. May facilitate cooperation between TIM22 and TOM complexes by interacting with TOMM40. This Homo sapiens (Human) protein is Mitochondrial import inner membrane translocase subunit Tim29.